Here is a 367-residue protein sequence, read N- to C-terminus: Auxin efflux carrier component 8 (367 aa).

The Extracellular segment spans residues methionine 1–aspartate 6. Residues isoleucine 7–serine 27 traverse the membrane as a helical segment. Residues alanine 28 to glutamine 38 lie on the Cytoplasmic side of the membrane. The helical transmembrane segment at cysteine 39–isoleucine 59 threads the bilayer. Isoleucine 51 is a (indol-3-yl)acetate binding site. Over serine 60–proline 69 the chain is Extracellular. Residues lysine 70 to leucine 90 form a helical membrane-spanning segment. Over arginine 91–tryptophan 105 the chain is Cytoplasmic. A helical transmembrane segment spans residues valine 106–leucine 126. (indol-3-yl)acetate-binding residues include asparagine 117 and leucine 119. Residues serine 127–serine 136 are Extracellular-facing. A helical transmembrane segment spans residues isoleucine 137–phenylalanine 157. Tyrosine 150 contributes to the (indol-3-yl)acetate binding site. The Cytoplasmic portion of the chain corresponds to glutamate 158–threonine 227. Positions serine 168–glutamate 194 are disordered. Over residues aspartate 178–glutamate 194 the composition is skewed to acidic residues. The chain crosses the membrane as a helical span at residues leucine 228–isoleucine 248. Residues aspartate 249–serine 251 lie on the Extracellular side of the membrane. A helical transmembrane segment spans residues isoleucine 252–alanine 272. The Cytoplasmic portion of the chain corresponds to serine 273–threonine 288. A helical transmembrane segment spans residues methionine 289–leucine 309. At lysine 310–threonine 312 the chain is on the extracellular side. The chain crosses the membrane as a helical span at residues leucine 313–alanine 333. (indol-3-yl)acetate is bound by residues valine 327 and valine 328. At lysine 334–serine 344 the chain is on the cytoplasmic side. The chain crosses the membrane as a helical span at residues threonine 345 to leucine 365. At aspartate 366 to leucine 367 the chain is on the extracellular side.

The protein belongs to the auxin efflux carrier (TC 2.A.69.1) family. In terms of assembly, homodimer. As to expression, expressed in veins of mature leaves. Strongly expressed in pollen.

It is found in the endoplasmic reticulum membrane. It localises to the cell membrane. With respect to regulation, auxin efflux carrier activity is competitively inhibited by naptalamate (N-1-naphthylphthalamic acid, NPA). In terms of biological role, acts as a component of the auxin efflux carrier. Component of the intracellular auxin-transport pathway in the male gametophyte. Involved in the regulation of auxin homeostasis in pollen. Involved in the efflux of auxin from the endoplasmic reticulum into the cytoplasm. Binds auxins including indole-3-acetic acid (IAA), naphthaleneacetic acid (NAA) and the herbicide 2,4-dichlorophenoxyacetic acid (2,4-D), but barely indole-3-butyric acid (IBA) and 2-phenylacetic acid (PAA). PIN5 and PIN8 may have an antagonistic/compensatory activity. Involved in the control of vein patterning. Redundantly with PIN6, inhibits the vein-formation-promoting functions of PIN5. PIN5, PIN6, and PIN8 control vein network geometry, but they are expressed in mutually exclusive domains of leaf vascular cells. The protein is Auxin efflux carrier component 8 of Arabidopsis thaliana (Mouse-ear cress).